A 256-amino-acid chain; its full sequence is Ubiquinone/menaquinone biosynthesis C-methyltransferase UbiE (256 aa).

Residues 1–12 (MNDQRKGDHAEP) are compositionally biased toward basic and acidic residues. The disordered stretch occupies residues 1 to 23 (MNDQRKGDHAEPTTHFGYQDVPE). Residues Thr-79, Asp-100, and 128 to 129 (DA) each bind S-adenosyl-L-methionine.

Belongs to the class I-like SAM-binding methyltransferase superfamily. MenG/UbiE family.

The catalysed reaction is a 2-demethylmenaquinol + S-adenosyl-L-methionine = a menaquinol + S-adenosyl-L-homocysteine + H(+). It carries out the reaction a 2-methoxy-6-(all-trans-polyprenyl)benzene-1,4-diol + S-adenosyl-L-methionine = a 5-methoxy-2-methyl-3-(all-trans-polyprenyl)benzene-1,4-diol + S-adenosyl-L-homocysteine + H(+). The protein operates within quinol/quinone metabolism; menaquinone biosynthesis; menaquinol from 1,4-dihydroxy-2-naphthoate: step 2/2. Its pathway is cofactor biosynthesis; ubiquinone biosynthesis. In terms of biological role, methyltransferase required for the conversion of demethylmenaquinol (DMKH2) to menaquinol (MKH2) and the conversion of 2-polyprenyl-6-methoxy-1,4-benzoquinol (DDMQH2) to 2-polyprenyl-3-methyl-6-methoxy-1,4-benzoquinol (DMQH2). This chain is Ubiquinone/menaquinone biosynthesis C-methyltransferase UbiE, found in Pseudomonas putida (strain GB-1).